Here is a 501-residue protein sequence, read N- to C-terminus: Raftlin-2 (501 aa).

Disordered regions lie at residues Met-1 to Phe-20 and Ser-196 to Gly-238. Gly-2 carries N-myristoyl glycine lipidation. Cys-3 is lipidated: S-palmitoyl cysteine. Polar residues predominate over residues Met-224–Ser-233. Ser-405 bears the Phosphoserine mark. Residues Ala-407–Pro-454 form a disordered region. A Phosphothreonine modification is found at Thr-409. Residues Thr-410–Lys-425 are compositionally biased toward basic and acidic residues. Polar residues predominate over residues Thr-427–Pro-440. Ser-430 carries the phosphoserine modification. A compositionally biased stretch (basic and acidic residues) spans Glu-442–Arg-451.

This sequence belongs to the raftlin family.

The protein resides in the cell membrane. Upon bacterial lipopolysaccharide stimulation, mediates clathrin-dependent internalization of TLR4 in dendritic cells, resulting in activation of TICAM1-mediated signaling and subsequent IFNB1 production. May regulate B-cell antigen receptor mediated-signaling. The sequence is that of Raftlin-2 (RFTN2) from Pongo abelii (Sumatran orangutan).